The primary structure comprises 299 residues: ATP phosphoribosyltransferase (299 aa).

This sequence belongs to the ATP phosphoribosyltransferase family. Long subfamily. Mg(2+) serves as cofactor.

The protein localises to the cytoplasm. It carries out the reaction 1-(5-phospho-beta-D-ribosyl)-ATP + diphosphate = 5-phospho-alpha-D-ribose 1-diphosphate + ATP. It participates in amino-acid biosynthesis; L-histidine biosynthesis; L-histidine from 5-phospho-alpha-D-ribose 1-diphosphate: step 1/9. Feedback inhibited by histidine. Catalyzes the condensation of ATP and 5-phosphoribose 1-diphosphate to form N'-(5'-phosphoribosyl)-ATP (PR-ATP). Has a crucial role in the pathway because the rate of histidine biosynthesis seems to be controlled primarily by regulation of HisG enzymatic activity. The chain is ATP phosphoribosyltransferase from Actinobacillus pleuropneumoniae serotype 5b (strain L20).